Here is a 55-residue protein sequence, read N- to C-terminus: UPF0291 protein CA_C2726 (55 aa).

The protein belongs to the UPF0291 family.

The protein localises to the cytoplasm. This chain is UPF0291 protein CA_C2726, found in Clostridium acetobutylicum (strain ATCC 824 / DSM 792 / JCM 1419 / IAM 19013 / LMG 5710 / NBRC 13948 / NRRL B-527 / VKM B-1787 / 2291 / W).